The sequence spans 86 residues: Weak toxin 3 (86 aa).

An N-terminal signal peptide occupies residues methionine 1–threonine 23. Cystine bridges form between cysteine 24-cysteine 45, cysteine 27-cysteine 32, cysteine 38-cysteine 63, cysteine 67-cysteine 78, and cysteine 79-cysteine 84.

Belongs to the three-finger toxin family. Ancestral subfamily. Orphan group II sub-subfamily. Expressed by the venom gland.

Its subcellular location is the secreted. In terms of biological role, binds with low affinity to muscular (alpha-1-beta-1-delta-epsilon/CHRNA1-CHRNB1-CHRND-CHRNE) and very low affinity to neuronal (alpha-7/CHRNA7) nicotinic acetylcholine receptor (nAChR). This is Weak toxin 3 from Bungarus candidus (Malayan krait).